The primary structure comprises 272 residues: Large ribosomal subunit protein uL2 (272 aa).

Residues 222-272 (GTAMNPVDHPHGGGEGRNFGKHPVSPWGKKTKGKKTRNNRLTDKFIVHRRS) form a disordered region. Over residues 250–259 (KKTKGKKTRN) the composition is skewed to basic residues. The span at 261–272 (RLTDKFIVHRRS) shows a compositional bias: basic and acidic residues.

The protein belongs to the universal ribosomal protein uL2 family. In terms of assembly, part of the 50S ribosomal subunit. Forms a bridge to the 30S subunit in the 70S ribosome.

Its function is as follows. One of the primary rRNA binding proteins. Required for association of the 30S and 50S subunits to form the 70S ribosome, for tRNA binding and peptide bond formation. It has been suggested to have peptidyltransferase activity; this is somewhat controversial. Makes several contacts with the 16S rRNA in the 70S ribosome. This chain is Large ribosomal subunit protein uL2, found in Baumannia cicadellinicola subsp. Homalodisca coagulata.